Here is a 282-residue protein sequence, read N- to C-terminus: 4-diphosphocytidyl-2-C-methyl-D-erythritol kinase (282 aa).

Lys-11 is a catalytic residue. An ATP-binding site is contributed by 95-105; it reads PMGGGVGGGSS. The active site involves Asp-137.

This sequence belongs to the GHMP kinase family. IspE subfamily.

It carries out the reaction 4-CDP-2-C-methyl-D-erythritol + ATP = 4-CDP-2-C-methyl-D-erythritol 2-phosphate + ADP + H(+). It participates in isoprenoid biosynthesis; isopentenyl diphosphate biosynthesis via DXP pathway; isopentenyl diphosphate from 1-deoxy-D-xylulose 5-phosphate: step 3/6. Functionally, catalyzes the phosphorylation of the position 2 hydroxy group of 4-diphosphocytidyl-2C-methyl-D-erythritol. In Haemophilus ducreyi (strain 35000HP / ATCC 700724), this protein is 4-diphosphocytidyl-2-C-methyl-D-erythritol kinase.